A 193-amino-acid chain; its full sequence is 3-isopropylmalate dehydratase small subunit (193 aa).

This sequence belongs to the LeuD family. LeuD type 1 subfamily. In terms of assembly, heterodimer of LeuC and LeuD.

The catalysed reaction is (2R,3S)-3-isopropylmalate = (2S)-2-isopropylmalate. Its pathway is amino-acid biosynthesis; L-leucine biosynthesis; L-leucine from 3-methyl-2-oxobutanoate: step 2/4. In terms of biological role, catalyzes the isomerization between 2-isopropylmalate and 3-isopropylmalate, via the formation of 2-isopropylmaleate. The chain is 3-isopropylmalate dehydratase small subunit from Bacillus thuringiensis subsp. konkukian (strain 97-27).